The chain runs to 173 residues: NADH-ubiquinone oxidoreductase chain 6 (173 aa).

A run of 5 helical transmembrane segments spans residues 1–21 (MTYFVLFLGLCFVLGGLAVAS), 27–47 (YGVVGLVLASVAGCGWLLSLG), 48–68 (ASFVSLVLFMVYLGGMLVVFV), 87–107 (VIGYGMGFIVVLVVGVVISGF), and 139–159 (WGVGMFLAAGWGLLLTLFVVL).

This sequence belongs to the complex I subunit 6 family.

It localises to the mitochondrion membrane. The catalysed reaction is a ubiquinone + NADH + 5 H(+)(in) = a ubiquinol + NAD(+) + 4 H(+)(out). In terms of biological role, core subunit of the mitochondrial membrane respiratory chain NADH dehydrogenase (Complex I) that is believed to belong to the minimal assembly required for catalysis. Complex I functions in the transfer of electrons from NADH to the respiratory chain. The immediate electron acceptor for the enzyme is believed to be ubiquinone. This Brachyramphus marmoratus (Marbled murrelet) protein is NADH-ubiquinone oxidoreductase chain 6 (MT-ND6).